A 24-amino-acid chain; its full sequence is Brevinin-1Ecb (24 aa).

The cysteines at positions 18 and 24 are disulfide-linked.

Expressed by the skin glands.

It is found in the secreted. In terms of biological role, shows antibacterial activity against representative Gram-negative and Gram-positive bacterial species, and hemolytic activity. The chain is Brevinin-1Ecb from Pelophylax ridibundus (Marsh frog).